A 55-amino-acid polypeptide reads, in one-letter code: Large ribosomal subunit protein bL33 (55 aa).

The protein is methylated on either Ala-2 or Lys-3.

The protein is Large ribosomal subunit protein bL33 of Rhodopseudomonas palustris (strain ATCC BAA-98 / CGA009).